Reading from the N-terminus, the 157-residue chain is Ribosomal RNA large subunit methyltransferase H (157 aa).

Residues L73, G105, and 124 to 129 contribute to the S-adenosyl-L-methionine site; that span reads LSRMTF.

Belongs to the RNA methyltransferase RlmH family. In terms of assembly, homodimer.

Its subcellular location is the cytoplasm. The enzyme catalyses pseudouridine(1915) in 23S rRNA + S-adenosyl-L-methionine = N(3)-methylpseudouridine(1915) in 23S rRNA + S-adenosyl-L-homocysteine + H(+). Functionally, specifically methylates the pseudouridine at position 1915 (m3Psi1915) in 23S rRNA. In Porphyromonas gingivalis (strain ATCC 33277 / DSM 20709 / CIP 103683 / JCM 12257 / NCTC 11834 / 2561), this protein is Ribosomal RNA large subunit methyltransferase H.